The chain runs to 246 residues: Pyridoxine 5'-phosphate synthase (246 aa).

The 3-amino-2-oxopropyl phosphate site is built by Asn-8 and Arg-19. The active-site Proton acceptor is His-44. 1-deoxy-D-xylulose 5-phosphate-binding residues include Arg-46 and His-51. The active-site Proton acceptor is Glu-76. Thr-106 lines the 1-deoxy-D-xylulose 5-phosphate pocket. Catalysis depends on His-198, which acts as the Proton donor. 3-amino-2-oxopropyl phosphate-binding positions include Asp-199 and 221 to 222; that span reads GH.

The protein belongs to the PNP synthase family. Homooctamer; tetramer of dimers.

The protein localises to the cytoplasm. It catalyses the reaction 3-amino-2-oxopropyl phosphate + 1-deoxy-D-xylulose 5-phosphate = pyridoxine 5'-phosphate + phosphate + 2 H2O + H(+). It functions in the pathway cofactor biosynthesis; pyridoxine 5'-phosphate biosynthesis; pyridoxine 5'-phosphate from D-erythrose 4-phosphate: step 5/5. Its function is as follows. Catalyzes the complicated ring closure reaction between the two acyclic compounds 1-deoxy-D-xylulose-5-phosphate (DXP) and 3-amino-2-oxopropyl phosphate (1-amino-acetone-3-phosphate or AAP) to form pyridoxine 5'-phosphate (PNP) and inorganic phosphate. The protein is Pyridoxine 5'-phosphate synthase of Brucella abortus (strain S19).